Here is a 191-residue protein sequence, read N- to C-terminus: Fe/S biogenesis protein NfuA (191 aa).

Residues C149 and C152 each contribute to the [4Fe-4S] cluster site.

The protein belongs to the NfuA family. In terms of assembly, homodimer. It depends on [4Fe-4S] cluster as a cofactor.

In terms of biological role, involved in iron-sulfur cluster biogenesis. Binds a 4Fe-4S cluster, can transfer this cluster to apoproteins, and thereby intervenes in the maturation of Fe/S proteins. Could also act as a scaffold/chaperone for damaged Fe/S proteins. This chain is Fe/S biogenesis protein NfuA, found in Salmonella typhi.